The primary structure comprises 267 residues: 4-hydroxy-tetrahydrodipicolinate reductase (267 aa).

NAD(+)-binding positions include 9–14 (GAGGRM) and D35. R36 contacts NADP(+). NAD(+) is bound by residues 99 to 101 (GTT) and 123 to 126 (AANY). H156 acts as the Proton donor/acceptor in catalysis. (S)-2,3,4,5-tetrahydrodipicolinate is bound at residue H157. The Proton donor role is filled by K160. 166 to 167 (GT) is a (S)-2,3,4,5-tetrahydrodipicolinate binding site.

This sequence belongs to the DapB family.

It localises to the cytoplasm. The catalysed reaction is (S)-2,3,4,5-tetrahydrodipicolinate + NAD(+) + H2O = (2S,4S)-4-hydroxy-2,3,4,5-tetrahydrodipicolinate + NADH + H(+). The enzyme catalyses (S)-2,3,4,5-tetrahydrodipicolinate + NADP(+) + H2O = (2S,4S)-4-hydroxy-2,3,4,5-tetrahydrodipicolinate + NADPH + H(+). The protein operates within amino-acid biosynthesis; L-lysine biosynthesis via DAP pathway; (S)-tetrahydrodipicolinate from L-aspartate: step 4/4. In terms of biological role, catalyzes the conversion of 4-hydroxy-tetrahydrodipicolinate (HTPA) to tetrahydrodipicolinate. The polypeptide is 4-hydroxy-tetrahydrodipicolinate reductase (Halorhodospira halophila (strain DSM 244 / SL1) (Ectothiorhodospira halophila (strain DSM 244 / SL1))).